The primary structure comprises 212 residues: Orotate phosphoribosyltransferase (212 aa).

A 5-phospho-alpha-D-ribose 1-diphosphate-binding site is contributed by Lys-26. 34–35 serves as a coordination point for orotate; sequence FF. 5-phospho-alpha-D-ribose 1-diphosphate is bound by residues 72–73, Arg-98, Lys-99, Lys-102, His-104, and 123–131; these read YK and DDVISAGTS. Orotate-binding residues include Ser-127 and Arg-155.

Belongs to the purine/pyrimidine phosphoribosyltransferase family. PyrE subfamily. In terms of assembly, homodimer. Mg(2+) is required as a cofactor.

The catalysed reaction is orotidine 5'-phosphate + diphosphate = orotate + 5-phospho-alpha-D-ribose 1-diphosphate. It functions in the pathway pyrimidine metabolism; UMP biosynthesis via de novo pathway; UMP from orotate: step 1/2. Catalyzes the transfer of a ribosyl phosphate group from 5-phosphoribose 1-diphosphate to orotate, leading to the formation of orotidine monophosphate (OMP). The polypeptide is Orotate phosphoribosyltransferase (Thiobacillus denitrificans (strain ATCC 25259 / T1)).